The primary structure comprises 615 residues: MPIQVLPPQLANQIAAGEVVERPASVVKELVENSLDAGATRIDIDIERGGAKLIRIRDNGCGIKKDELALALARHATSKIASLDDLEAIISLGFRGEALASISSVSRLTLTSRTAEQQEAWQAYAEGRDMNVTVKPAAHPVGTTLEVLDLFYNTPARRKFLRTEKTEFNHIDEIIRRIALARFDVTINLSHNGKIVRQYRAVPEGGQKERRLGAICGTAFLEQALAIEWQHGDLTLRGWVADPNHTTPALAEIQYCYVNGRMMRDRLINHAIRQACEDKLGADQQPAFVLYLEIDPHQVDVNVHPAKHEVRFHQSRLVHDFIYQGVLSVLQQQLETPLPLDDEPQPAPRSIPENRVAAGRNHFAEPAAREPVAPRYTPAPASGSRPAAPWPNAQPGYQKQQGEVYRQLLQTPAPMQKLKAPEPQEPALAANSQSFGRVLTIVHSDCALLERDGNISLLSLPVAERWLRQAQLTPGEAPVCAQPLLIPLRLKVSAEEKSALEKAQSALAELGIDFQSDAQHVTIRAVPLPLRQQNLQILIPELIGYLAKQSVFEPGNIAQWIARNLMSEHAQWSMAQAITLLADVERLCPQLVKTPPGGLLQSVDLHPAIKALKDE.

Residues 363–397 (FAEPAAREPVAPRYTPAPASGSRPAAPWPNAQPGY) form a disordered region. Positions 364–391 (AEPAAREPVAPRYTPAPASGSRPAAPWP) are enriched in low complexity.

Belongs to the DNA mismatch repair MutL/HexB family.

This protein is involved in the repair of mismatches in DNA. It is required for dam-dependent methyl-directed DNA mismatch repair. May act as a 'molecular matchmaker', a protein that promotes the formation of a stable complex between two or more DNA-binding proteins in an ATP-dependent manner without itself being part of a final effector complex. The sequence is that of DNA mismatch repair protein MutL from Escherichia coli (strain K12 / MC4100 / BW2952).